Reading from the N-terminus, the 409-residue chain is Peptidase T (409 aa).

His78 contributes to the Zn(2+) binding site. Residue Asp80 is part of the active site. Asp140 is a binding site for Zn(2+). Glu173 (proton acceptor) is an active-site residue. Glu174, Asp196, and His379 together coordinate Zn(2+).

Belongs to the peptidase M20B family. It depends on Zn(2+) as a cofactor.

Its subcellular location is the cytoplasm. It carries out the reaction Release of the N-terminal residue from a tripeptide.. Cleaves the N-terminal amino acid of tripeptides. In Salmonella heidelberg (strain SL476), this protein is Peptidase T.